Consider the following 1571-residue polypeptide: Guanine nucleotide-releasing factor 2 (1571 aa).

Disordered stretches follow at residues 28–85, 202–271, and 287–316; these read LPPH…RDTN, INSG…KLAR, and MRTT…PTTE. The segment covering 55-73 has biased composition (basic residues); it reads QLHHHHHQQHHHNHHRLWK. A compositionally biased stretch (polar residues) spans 74 to 83; the sequence is TQRQSWSPRD. Residues 230–248 show a composition bias toward gly residues; the sequence is TPGGSSRVGGAGAGGGGGV. A compositionally biased stretch (polar residues) spans 287–297; the sequence is MRTTNNTLGRS. Positions 298-309 are enriched in basic residues; it reads HSPHSPRTKHGT. Phosphoserine occurs at positions 496 and 523. Disordered regions lie at residues 513-580, 614-646, 695-719, 728-747, 776-868, and 879-898; these read HNVN…QASP, RSRS…HQHL, GEGV…ESGF, STQT…SSNS, QRHI…SEVA, and LNHH…HSKH. The residue at position 524 (Thr524) is a Phosphothreonine. Residue Ser526 is modified to Phosphoserine. The span at 532–550 shows a compositional bias: pro residues; sequence SPPPKPPLPNRASNPPPLP. The SH3-binding motif lies at 546–556; sequence PPPLPPKRRSQ. Over residues 556–579 the composition is skewed to low complexity; the sequence is QPSASAGTVGVGCSSSTSTSNQAS. Ser615 is modified (phosphoserine). Over residues 620–631 the composition is skewed to polar residues; that stretch reads ENSQCSFDSALN. A compositionally biased stretch (low complexity) spans 697 to 707; sequence GVAAAASGDGE. A compositionally biased stretch (polar residues) spans 708–718; the sequence is TNSNRHSNESG. Composition is skewed to low complexity over residues 735–747 and 780–824; these read SVQS…SSNS and SSSS…DLAP. The short motif at 820-831 is the SH3-binding element; the sequence is ADLAPALPPKSI. The span at 851–866 shows a compositional bias: polar residues; that stretch reads VQSSSGWASHRSSQSE. 2 consecutive short sequence motifs (SH3-binding) follow at residues 924–935 and 986–997; these read DQEPPPLPIKKK and LEMPPALPPKNY. Residues 1013 to 1038 are disordered; that stretch reads PVIVTTPPPSPKPTLGENGSTGRPDS. An N-terminal Ras-GEF domain is found at 1170–1292; sequence DGPEVKGGYI…LRNKFVEKVT (123 aa). Residues 1339 to 1564 form the Ras-GEF domain; that stretch reads KSLEIAEQMT…WQISEKIKPR (226 aa).

Ubiquitous.

In terms of biological role, guanine nucleotide-releasing protein that binds to SH3 domain of Crk. Transduces signals from Crk to activate RAS. Also involved in MAPK activation. The protein is Guanine nucleotide-releasing factor 2 (C3G) of Drosophila melanogaster (Fruit fly).